Consider the following 372-residue polypeptide: tRNA-specific 2-thiouridylase MnmA (372 aa).

Residues 11–18 (GMSGGVDS) and Met37 contribute to the ATP site. Residues 97 to 99 (NPD) form an interaction with target base in tRNA region. The active-site Nucleophile is the Cys102. A disulfide bridge connects residues Cys102 and Cys199. An ATP-binding site is contributed by Gly126. Positions 149 to 151 (KDQ) are interaction with tRNA. Cys199 serves as the catalytic Cysteine persulfide intermediate. The segment at 309-310 (RY) is interaction with tRNA.

The protein belongs to the MnmA/TRMU family.

The protein localises to the cytoplasm. It carries out the reaction S-sulfanyl-L-cysteinyl-[protein] + uridine(34) in tRNA + AH2 + ATP = 2-thiouridine(34) in tRNA + L-cysteinyl-[protein] + A + AMP + diphosphate + H(+). Catalyzes the 2-thiolation of uridine at the wobble position (U34) of tRNA, leading to the formation of s(2)U34. This Staphylococcus aureus (strain MSSA476) protein is tRNA-specific 2-thiouridylase MnmA.